We begin with the raw amino-acid sequence, 364 residues long: Methylthioribose-1-phosphate isomerase (364 aa).

The active-site Proton donor is D254.

This sequence belongs to the eIF-2B alpha/beta/delta subunits family. MtnA subfamily.

The protein resides in the cytoplasm. The protein localises to the nucleus. The catalysed reaction is 5-(methylsulfanyl)-alpha-D-ribose 1-phosphate = 5-(methylsulfanyl)-D-ribulose 1-phosphate. It participates in amino-acid biosynthesis; L-methionine biosynthesis via salvage pathway; L-methionine from S-methyl-5-thio-alpha-D-ribose 1-phosphate: step 1/6. In terms of biological role, catalyzes the interconversion of methylthioribose-1-phosphate (MTR-1-P) into methylthioribulose-1-phosphate (MTRu-1-P). The polypeptide is Methylthioribose-1-phosphate isomerase (Drosophila melanogaster (Fruit fly)).